Here is a 353-residue protein sequence, read N- to C-terminus: Photosystem II protein D1 (353 aa).

T2 is modified (N-acetylthreonine). T2 is subject to Phosphothreonine. The next 3 helical transmembrane spans lie at Y29 to S46, H118 to L133, and W142 to A156. Position 118 (H118) interacts with chlorophyll a. Y126 lines the pheophytin a pocket. [CaMn4O5] cluster contacts are provided by D170 and E189. The chain crosses the membrane as a helical span at residues F197 to L218. H198 is a chlorophyll a binding site. A quinone-binding positions include H215 and S264 to F265. Position 215 (H215) interacts with Fe cation. H272 contributes to the Fe cation binding site. The chain crosses the membrane as a helical span at residues F274–L288. 4 residues coordinate [CaMn4O5] cluster: H332, E333, D342, and A344. Positions A345–G353 are excised as a propeptide.

This sequence belongs to the reaction center PufL/M/PsbA/D family. In terms of assembly, PSII is composed of 1 copy each of membrane proteins PsbA, PsbB, PsbC, PsbD, PsbE, PsbF, PsbH, PsbI, PsbJ, PsbK, PsbL, PsbM, PsbT, PsbX, PsbY, PsbZ, Psb30/Ycf12, at least 3 peripheral proteins of the oxygen-evolving complex and a large number of cofactors. It forms dimeric complexes. Requires The D1/D2 heterodimer binds P680, chlorophylls that are the primary electron donor of PSII, and subsequent electron acceptors. It shares a non-heme iron and each subunit binds pheophytin, quinone, additional chlorophylls, carotenoids and lipids. D1 provides most of the ligands for the Mn4-Ca-O5 cluster of the oxygen-evolving complex (OEC). There is also a Cl(-1) ion associated with D1 and D2, which is required for oxygen evolution. The PSII complex binds additional chlorophylls, carotenoids and specific lipids. as cofactor. Post-translationally, tyr-161 forms a radical intermediate that is referred to as redox-active TyrZ, YZ or Y-Z. In terms of processing, C-terminally processed by CTPA; processing is essential to allow assembly of the oxygen-evolving complex and thus photosynthetic growth.

The protein resides in the plastid. It localises to the chloroplast thylakoid membrane. The enzyme catalyses 2 a plastoquinone + 4 hnu + 2 H2O = 2 a plastoquinol + O2. Functionally, photosystem II (PSII) is a light-driven water:plastoquinone oxidoreductase that uses light energy to abstract electrons from H(2)O, generating O(2) and a proton gradient subsequently used for ATP formation. It consists of a core antenna complex that captures photons, and an electron transfer chain that converts photonic excitation into a charge separation. The D1/D2 (PsbA/PsbD) reaction center heterodimer binds P680, the primary electron donor of PSII as well as several subsequent electron acceptors. This chain is Photosystem II protein D1, found in Marchantia polymorpha (Common liverwort).